We begin with the raw amino-acid sequence, 496 residues long: Probable diguanylate cyclase DgcJ (496 aa).

Transmembrane regions (helical) follow at residues 11–31 (FIAA…LVAS) and 305–325 (ILYF…TALI). The GGDEF domain maps to 374-496 (SSVMFIAIDM…VNKQNKNSRS (123 aa)). Asp-382 lines the Mg(2+) pocket. Asn-390, His-395, and Asp-399 together coordinate substrate. Asp-425 provides a ligand contact to Mg(2+). Catalysis depends on Asp-425, which acts as the Proton acceptor.

As to quaternary structure, homodimer. The cofactor is Mg(2+).

It localises to the cell inner membrane. The enzyme catalyses 2 GTP = 3',3'-c-di-GMP + 2 diphosphate. Its pathway is purine metabolism; 3',5'-cyclic di-GMP biosynthesis. Functionally, catalyzes the synthesis of cyclic-di-GMP (c-di-GMP) via the condensation of 2 GTP molecules. In Escherichia coli (strain K12), this protein is Probable diguanylate cyclase DgcJ.